Consider the following 79-residue polypeptide: MRSQHVLILLLGLVCASQVLGKHLTKVKAKALHYDKRGDCDWPTGVCFYIHDPCPPGLRRCPQHDDGCYLPTNHCCCYP.

Positions Met1–Gly21 are cleaved as a signal peptide. The propeptide occupies Lys22–Asp35.

It belongs to the Cnidaria small cysteine-rich protein (SCRiP) family. delta subfamily. Contains 4 disulfide bonds.

Its subcellular location is the secreted. The protein resides in the nematocyst. This recombinant protein induces severe neurotoxicity on zebrafish larvae (Danio rerio) at a concentration of 230 mg/ml, but does not show toxicity when injected in blowfly larvae (Sarcophaga falculata). All fish incubated with this protein died within 200 minutes of exposure. Has also been claimed to be implied in calcification, but this function seems improbable. The sequence is that of Small cysteine-rich protein 2 from Acropora millepora (Staghorn coral).